The primary structure comprises 833 residues: Copper-exporting P-type ATPase (833 aa).

HMA domains follow at residues 3–64 (QTID…YGAT) and 98–161 (ESQQ…YGAE). The Cu(+) site is built by C14, C17, C109, and C112. 6 helical membrane passes run 186 to 206 (WQAI…MIGD), 217 to 237 (LWLA…GHFY), 253 to 273 (TLVA…NLWP), 283 to 303 (LYYE…MLEA), 437 to 457 (AVFV…WYFF), and 463 to 483 (IVYT…CALG). The active-site 4-aspartylphosphate intermediate is D522. Mg(2+)-binding residues include D719 and D723. A run of 2 helical transmembrane segments spans residues 778 to 798 (LGAF…LWPF) and 800 to 820 (GTLL…ITVV).

It belongs to the cation transport ATPase (P-type) (TC 3.A.3) family. Type IB subfamily.

Its subcellular location is the cell inner membrane. It localises to the cytoplasm. The enzyme catalyses Cu(+)(in) + ATP + H2O = Cu(+)(out) + ADP + phosphate + H(+). Involved in Cu(+) export. Essential for copper tolerance under both aerobic and anaerobic conditions. In terms of biological role, probably also encodes a cytoplasmic copper chaperone CopA(Z) that is produced by programmed ribosomal frameshifting. The chain is Copper-exporting P-type ATPase (copA) from Salmonella typhimurium (strain LT2 / SGSC1412 / ATCC 700720).